Consider the following 400-residue polypeptide: Tryptophan synthase beta chain (400 aa).

The residue at position 90 (Lys-90) is an N6-(pyridoxal phosphate)lysine.

This sequence belongs to the TrpB family. In terms of assembly, tetramer of two alpha and two beta chains. The cofactor is pyridoxal 5'-phosphate.

The catalysed reaction is (1S,2R)-1-C-(indol-3-yl)glycerol 3-phosphate + L-serine = D-glyceraldehyde 3-phosphate + L-tryptophan + H2O. It participates in amino-acid biosynthesis; L-tryptophan biosynthesis; L-tryptophan from chorismate: step 5/5. The beta subunit is responsible for the synthesis of L-tryptophan from indole and L-serine. This chain is Tryptophan synthase beta chain, found in Alkaliphilus metalliredigens (strain QYMF).